The chain runs to 157 residues: 2-C-methyl-D-erythritol 2,4-cyclodiphosphate synthase (157 aa).

Residues aspartate 8 and histidine 10 each coordinate a divalent metal cation. Residues 8–10 (DVH) and 34–35 (HS) contribute to the 4-CDP-2-C-methyl-D-erythritol 2-phosphate site. Residue histidine 42 participates in a divalent metal cation binding. 4-CDP-2-C-methyl-D-erythritol 2-phosphate is bound by residues 56 to 58 (DIG), 61 to 65 (FPDTD), 100 to 106 (AQAPKMA), 132 to 135 (TTEE), phenylalanine 139, and arginine 142.

This sequence belongs to the IspF family. In terms of assembly, homotrimer. It depends on a divalent metal cation as a cofactor.

The catalysed reaction is 4-CDP-2-C-methyl-D-erythritol 2-phosphate = 2-C-methyl-D-erythritol 2,4-cyclic diphosphate + CMP. Its pathway is isoprenoid biosynthesis; isopentenyl diphosphate biosynthesis via DXP pathway; isopentenyl diphosphate from 1-deoxy-D-xylulose 5-phosphate: step 4/6. In terms of biological role, involved in the biosynthesis of isopentenyl diphosphate (IPP) and dimethylallyl diphosphate (DMAPP), two major building blocks of isoprenoid compounds. Catalyzes the conversion of 4-diphosphocytidyl-2-C-methyl-D-erythritol 2-phosphate (CDP-ME2P) to 2-C-methyl-D-erythritol 2,4-cyclodiphosphate (ME-CPP) with a corresponding release of cytidine 5-monophosphate (CMP). The chain is 2-C-methyl-D-erythritol 2,4-cyclodiphosphate synthase from Pseudomonas entomophila (strain L48).